We begin with the raw amino-acid sequence, 119 residues long: Large ribosomal subunit protein bL20 (119 aa).

It belongs to the bacterial ribosomal protein bL20 family.

In terms of biological role, binds directly to 23S ribosomal RNA and is necessary for the in vitro assembly process of the 50S ribosomal subunit. It is not involved in the protein synthesizing functions of that subunit. This chain is Large ribosomal subunit protein bL20, found in Gloeobacter violaceus (strain ATCC 29082 / PCC 7421).